Consider the following 75-residue polypeptide: MARYFRRRKFCRFTAEGVQEIDYKDIATLKNYITESGKIVPSRITGTRAKYQRQLARAIKRARYLSLLPYTDRHQ.

The protein belongs to the bacterial ribosomal protein bS18 family. Part of the 30S ribosomal subunit. Forms a tight heterodimer with protein bS6.

In terms of biological role, binds as a heterodimer with protein bS6 to the central domain of the 16S rRNA, where it helps stabilize the platform of the 30S subunit. In Klebsiella pneumoniae (strain 342), this protein is Small ribosomal subunit protein bS18.